The sequence spans 394 residues: Elongation factor Tu (394 aa).

A tr-type G domain is found at 10 to 204 (KEHANIGTIG…AVDTYIPTPE (195 aa)). Residues 19–26 (GHVDHGKT) form a G1 region. 19–26 (GHVDHGKT) contributes to the GTP binding site. T26 is a binding site for Mg(2+). A G2 region spans residues 60 to 64 (GITIN). Residues 81 to 84 (DCPG) form a G3 region. GTP is bound by residues 81–85 (DCPGH) and 136–139 (NKVD). The segment at 136-139 (NKVD) is G4. A G5 region spans residues 174–176 (SAL).

Belongs to the TRAFAC class translation factor GTPase superfamily. Classic translation factor GTPase family. EF-Tu/EF-1A subfamily. As to quaternary structure, monomer.

The protein resides in the cytoplasm. It carries out the reaction GTP + H2O = GDP + phosphate + H(+). In terms of biological role, GTP hydrolase that promotes the GTP-dependent binding of aminoacyl-tRNA to the A-site of ribosomes during protein biosynthesis. The protein is Elongation factor Tu of Staphylococcus aureus (strain COL).